A 568-amino-acid chain; its full sequence is Oxygen-dependent choline dehydrogenase (568 aa).

An FAD-binding site is contributed by 6 to 35; that stretch reads DYIIVGAGSAGCVLADRLSASGEHYILLLE. His470 (proton acceptor) is an active-site residue.

It belongs to the GMC oxidoreductase family. FAD serves as cofactor.

The enzyme catalyses choline + A = betaine aldehyde + AH2. It carries out the reaction betaine aldehyde + NAD(+) + H2O = glycine betaine + NADH + 2 H(+). It participates in amine and polyamine biosynthesis; betaine biosynthesis via choline pathway; betaine aldehyde from choline (cytochrome c reductase route): step 1/1. Its function is as follows. Involved in the biosynthesis of the osmoprotectant glycine betaine. Catalyzes the oxidation of choline to betaine aldehyde and betaine aldehyde to glycine betaine at the same rate. The polypeptide is Oxygen-dependent choline dehydrogenase (Photobacterium profundum (strain SS9)).